The primary structure comprises 181 residues: 3-isopropylmalate dehydratase small subunit (181 aa).

Belongs to the LeuD family. LeuD type 2 subfamily. In terms of assembly, heterodimer of LeuC and LeuD.

The enzyme catalyses (2R,3S)-3-isopropylmalate = (2S)-2-isopropylmalate. The protein operates within amino-acid biosynthesis; L-leucine biosynthesis; L-leucine from 3-methyl-2-oxobutanoate: step 2/4. Its function is as follows. Catalyzes the isomerization between 2-isopropylmalate and 3-isopropylmalate, via the formation of 2-isopropylmaleate. The protein is 3-isopropylmalate dehydratase small subunit of Deinococcus deserti (strain DSM 17065 / CIP 109153 / LMG 22923 / VCD115).